A 1176-amino-acid polypeptide reads, in one-letter code: MRLTQLKLAGFKSFVDPTVIPVPSQLVGVVGPNGCGKSNIIDAVRWVLGEAKASELRGESMQDVIFNGSGNRKPAARASVEMVFDNSEGRAAGQWSTYSEIAVRRVLTRDGTSSYYVNNQQVRRRDIHDIFLGTGLGARGYAIIGQGMINRLIEARPEELRVFLEEAAGVSRYKERRRETENRLSDTRENLTRVEDILRELGSQLEKLEAQAEVARQYRELQADGEKKQFALWLLKETGARDERQRKSQEMAQAQTNLEAAIANLRSGEAELESRRQAHYAAGDAVHAAQGQLYEANAQVSRLEAEIRHVVDSRNRLQARREQLQQQIAEWDAQQTHCVEQIAQAEDDLATGAARTEEARALAEEAHASLPAVEARVRDAAASRDEMRSSLARVEQNLALAAQTQRDADRQLQNLEQRRERLQQELRELHAPDPVRLEQLAGDRAAGEDQLEEAQQELAALEARVPEADAERSRAQAAAQQDAQNLARLEARLAALVKLQEDVQKQGALEPWLAKHELAGLGRLWQKLHIEPGWENALEAVLRERMAALEVRNLDWSRAFAEDAPPARLAFYQMPAAAPTPAAPQGLTPLASLLRITDPDLRTLLNDWLGNIYTAPDLGQALAARATLPAGAACVVPAGHLVDAHSVRFYAPDSEQAGLLARQQEIENLQREIKAQQLIADQARAAVARAESAWQQVSQAVAPARQRVAEITRRVHDIQLEHSRLQQQAEQSGERAARLRQDLEEISAHEEDLRATREEAEARFEALDAELAEHQSRFADAEIAGEDLAAQAEAARARLRELERAAQEAEFAERGVQSRIADLQRNRQLAADQSQRAAVELEQLQADLADLDASASQAGLQDALEVRAEREEALSRARQELDNLSALLRGADEERMQQERALEPLRARITELQLQEQAARLAEEQFTEQLNAREVDREALAQELAAMPDEWRRANWLQSEVGRISRQIDSLGSVNLAALDELNASRERKEFLDSQQQDLLTAIDTLEDAIRKIDRETRELLQATFDTVNGHFGELFPKLFGGGEAKLTMTGDEILDAGVQVMAQPPGKRNSTIHLLSGGEKALTATALVFALFKLNPAPFCLLDEVDAPLDDANTERYANLVSSMSEQTQFLFISHNKIAMQMAKQLVGVTMQEQGVSRIVAVDIDSAVQMAAEAA.

32–39 contacts ATP; that stretch reads PNGCGKSN. Residues 169–506 are a coiled coil; it reads GVSRYKERRR…VKLQEDVQKQ (338 aa). Positions 521 to 623 constitute an SMC hinge domain; sequence LGRLWQKLHI…TAPDLGQALA (103 aa). 2 coiled-coil regions span residues 653–947 and 987–1024; these read DSEQ…LAAM and ERKE…LQAT.

Belongs to the SMC family. In terms of assembly, homodimer.

It is found in the cytoplasm. Required for chromosome condensation and partitioning. This chain is Chromosome partition protein Smc, found in Bordetella petrii (strain ATCC BAA-461 / DSM 12804 / CCUG 43448).